The sequence spans 100 residues: Dromyosuppressin (100 aa).

A signal peptide spans 1–24 (MSFAQFFVACCLAIVLLAVSNTRA). A propeptide spanning residues 25-84 (AVQGPPLCQSGIVEEMPPHIRKVCQALENSDQLTSALKSYINNEASALVANSDDLLKNYN) is cleaved from the precursor. A Phenylalanine amide modification is found at Phe96.

Belongs to the myosuppressin family.

It is found in the secreted. Myoinhibiting neuropeptide. The sequence is that of Dromyosuppressin from Drosophila melanogaster (Fruit fly).